A 408-amino-acid polypeptide reads, in one-letter code: Metacaspase-1B (408 aa).

Positions 1 to 98 are disordered; that stretch reads MYHRHSAPPP…PPLEAQQFGN (98 aa). Composition is skewed to pro residues over residues 24 to 49 and 56 to 66; these read WPPP…FPPP and SPYPTPPPHSP. Catalysis depends on residues H199 and C255.

The protein belongs to the peptidase C14B family.

Involved in cell death (apoptosis). Required for the apoptotic-like loss of membrane phospholipid asymmetry at stationary phase and facilitates growth under conditions of endoplasmic reticulum stress. The sequence is that of Metacaspase-1B (casB) from Aspergillus fumigatus (strain CBS 144.89 / FGSC A1163 / CEA10) (Neosartorya fumigata).